A 313-amino-acid chain; its full sequence is Olfactory receptor 2B6 (313 aa).

The Extracellular segment spans residues 1-25; the sequence is MNWVNDSIIQEFILLGFSDRPWLEF. Asparagine 5 carries an N-linked (GlcNAc...) asparagine glycan. The chain crosses the membrane as a helical span at residues 26 to 49; that stretch reads PLLVVFLISYTVTIFGNLTIILVS. Topologically, residues 50 to 57 are cytoplasmic; it reads RLDTKLHT. The helical transmembrane segment at 58–79 threads the bilayer; the sequence is PMYFFLTNLSLLDLCYTTCTVP. Residues 80–100 lie on the Extracellular side of the membrane; that stretch reads QMLVNLCSIRKVISYRGCVAQ. Cysteines 97 and 189 form a disulfide. Residues 101–120 form a helical membrane-spanning segment; sequence LFIFLALGATEYLLLAVMSF. At 121-139 the chain is on the cytoplasmic side; sequence DRFVAICRPLHYSVIMHQR. The helical transmembrane segment at 140–158 threads the bilayer; the sequence is LCLQLAAASWVTGFSNSVW. Residues 159–195 lie on the Extracellular side of the membrane; the sequence is LSTLTLQLPLCDPYVIDHFLCEVPALLKLSCVETTAN. Residues 196 to 219 traverse the membrane as a helical segment; it reads EAELFLVSELFHLIPLTLILISYA. Topologically, residues 220 to 236 are cytoplasmic; the sequence is FIVRAVLRIQSAEGRQK. The chain crosses the membrane as a helical span at residues 237 to 259; the sequence is AFGTCGSHLIVVSLFYSTAVSVY. Residues 260-272 lie on the Extracellular side of the membrane; sequence LQPPSPSSKDQGK. The chain crosses the membrane as a helical span at residues 273–292; it reads MVSLFYGIIAPMLNPLIYTL. Over 293-313 the chain is Cytoplasmic; it reads RNKEVKEGFKRLVARVFLIKK.

Belongs to the G-protein coupled receptor 1 family.

The protein resides in the cell membrane. Odorant receptor. This Homo sapiens (Human) protein is Olfactory receptor 2B6.